We begin with the raw amino-acid sequence, 359 residues long: Tyrosine-protein phosphatase non-receptor type 7 (359 aa).

The disordered stretch occupies residues 1–33; it reads MVQACEGRSRAQLPTLSLGADMTQPPPTKAPAK. Residues 38 to 51 form an interaction with MAP kinases region; that stretch reads LQERRGSSVALMLD. At Ser44 the chain carries Phosphoserine. Residue Thr66 is modified to Phosphothreonine. Phosphoserine is present on residues Ser93 and Ser143. The Tyrosine-protein phosphatase domain occupies 97–349; the sequence is LEEEFLKIPS…QFLHHTLALY (253 aa). Substrate-binding positions include Asp257, 290 to 296, and Gln334; that span reads CSAGIGR. The active-site Phosphocysteine intermediate is the Cys290. Cys290 is subject to Cysteine sulfenic acid (-SOH).

It belongs to the protein-tyrosine phosphatase family. Non-receptor class subfamily. Oxidized at active site cysteine. Treatment with pervanadate (vanadate and H(2)O(2)) or with antigen enhanced oxidation of active site cysteine. As to expression, expressed in bone marrow-derived mast cells.

The protein localises to the cytoplasm. The protein resides in the cytoskeleton. It catalyses the reaction O-phospho-L-tyrosyl-[protein] + H2O = L-tyrosyl-[protein] + phosphate. Inhibited upon FCER1A triggering. In terms of biological role, may play a role in the regulation of T and B-lymphocyte development and signal transduction. This chain is Tyrosine-protein phosphatase non-receptor type 7 (Ptpn7), found in Mus musculus (Mouse).